Here is a 284-residue protein sequence, read N- to C-terminus: uncharacterized protein (284 aa).

Topologically, residues 1 to 8 (MLWKVSKM) are cytoplasmic. Residues 9–25 (FLGGLVALTTISVATLY) traverse the membrane as a helical segment. Residues 26–80 (HYQNRLVYPSWAQGARNHVDTPDSRGIPYEKLTLITQDHIKLEAWDIKNENSTST) lie on the Extracellular side of the membrane. The chain crosses the membrane as a helical span at residues 81 to 101 (VLILCPNAGNIGYFILIIDIF). At 102-284 (YRQFGMSVFI…RDFLIEKGFI (183 aa)) the chain is on the cytoplasmic side.

To S.pombe bem46 and M.tuberculosis Rv2307c.

It localises to the mitochondrion membrane. This is an uncharacterized protein from Saccharomyces cerevisiae (strain ATCC 204508 / S288c) (Baker's yeast).